The sequence spans 436 residues: Adenine nucleotide transporter BT1, chloroplastic/amyloplastic/mitochondrial (436 aa).

The disordered stretch occupies residues 83–135 (ASLAPPFPGSRPPGRRGRGSEEEEAEGRRHEEAAAAGRSEPEEGQGQDRQPAP). 3 Solcar repeats span residues 132–216 (QPAP…AKKF), 227–311 (IPIP…LKRL), and 324–412 (VGPV…CKKI). Helical transmembrane passes span 137–158 (RLVSGAIAGAVSRTFVAPLETI), 193–213 (AVNVLRVAPSKAIEHFTYDTA), 229–247 (IPTPLVAGALAGFASTLCT), 290–310 (SLIGVVPYAACNFYAYETLKR), 327–347 (VATLLIGSAAGAIASSATFPL), and 384–405 (LYRGLGPSCIKLMPAAGIAFMC). Over residues 417-428 (EDEEEEDEAGGG) the composition is skewed to acidic residues. A disordered region spans residues 417–436 (EDEEEEDEAGGGEDDKKKVE).

This sequence belongs to the mitochondrial carrier (TC 2.A.29) family. As to expression, highly expressed in silks and endosperm of developing kernels. Expressed at intermediate levels in tassels and lower levels in stems and leaves.

Its subcellular location is the plastid. It is found in the chloroplast inner membrane. It localises to the amyloplast inner membrane. The protein resides in the mitochondrion inner membrane. Inhibited by mersalyl. Its function is as follows. Probable adenylate translocator that mediates transport of ADP-glucose into endosperm storage plastids during starch synthesis. Transports cytosolic ADP-glucose to amyloplast stroma by counter-exchange with ADP. This chain is Adenine nucleotide transporter BT1, chloroplastic/amyloplastic/mitochondrial (BT1), found in Zea mays (Maize).